A 227-amino-acid polypeptide reads, in one-letter code: Cytochrome c oxidase subunit 2 (227 aa).

At 1-14 (MAYPFQLGLQDATS) the chain is on the mitochondrial intermembrane side. The helical transmembrane segment at 15–45 (PIMEELTNFHDHTLMIVFLISSLVLYIISLM) threads the bilayer. At 46–59 (LTTKLTHTSTMDAQ) the chain is on the mitochondrial matrix side. A helical transmembrane segment spans residues 60–87 (EVETIWTILPAVILILIALPSLRILYMM). Residues 88–227 (DEINNPVLTV…HFENWSASMI (140 aa)) lie on the Mitochondrial intermembrane side of the membrane. The Cu cation site is built by His161, Cys196, Glu198, Cys200, His204, and Met207. Glu198 lines the Mg(2+) pocket.

Belongs to the cytochrome c oxidase subunit 2 family. Component of the cytochrome c oxidase (complex IV, CIV), a multisubunit enzyme composed of 14 subunits. The complex is composed of a catalytic core of 3 subunits MT-CO1, MT-CO2 and MT-CO3, encoded in the mitochondrial DNA, and 11 supernumerary subunits COX4I, COX5A, COX5B, COX6A, COX6B, COX6C, COX7A, COX7B, COX7C, COX8 and NDUFA4, which are encoded in the nuclear genome. The complex exists as a monomer or a dimer and forms supercomplexes (SCs) in the inner mitochondrial membrane with NADH-ubiquinone oxidoreductase (complex I, CI) and ubiquinol-cytochrome c oxidoreductase (cytochrome b-c1 complex, complex III, CIII), resulting in different assemblies (supercomplex SCI(1)III(2)IV(1) and megacomplex MCI(2)III(2)IV(2)). Found in a complex with TMEM177, COA6, COX18, COX20, SCO1 and SCO2. Interacts with TMEM177 in a COX20-dependent manner. Interacts with COX20. Interacts with COX16. Cu cation serves as cofactor.

It is found in the mitochondrion inner membrane. The enzyme catalyses 4 Fe(II)-[cytochrome c] + O2 + 8 H(+)(in) = 4 Fe(III)-[cytochrome c] + 2 H2O + 4 H(+)(out). Component of the cytochrome c oxidase, the last enzyme in the mitochondrial electron transport chain which drives oxidative phosphorylation. The respiratory chain contains 3 multisubunit complexes succinate dehydrogenase (complex II, CII), ubiquinol-cytochrome c oxidoreductase (cytochrome b-c1 complex, complex III, CIII) and cytochrome c oxidase (complex IV, CIV), that cooperate to transfer electrons derived from NADH and succinate to molecular oxygen, creating an electrochemical gradient over the inner membrane that drives transmembrane transport and the ATP synthase. Cytochrome c oxidase is the component of the respiratory chain that catalyzes the reduction of oxygen to water. Electrons originating from reduced cytochrome c in the intermembrane space (IMS) are transferred via the dinuclear copper A center (CU(A)) of subunit 2 and heme A of subunit 1 to the active site in subunit 1, a binuclear center (BNC) formed by heme A3 and copper B (CU(B)). The BNC reduces molecular oxygen to 2 water molecules using 4 electrons from cytochrome c in the IMS and 4 protons from the mitochondrial matrix. This chain is Cytochrome c oxidase subunit 2 (MT-CO2), found in Batomys granti (Luzon hairy-tailed rat).